Consider the following 269-residue polypeptide: Transcription factor MYB7 (269 aa).

HTH myb-type domains follow at residues 9-61 (KEHM…INYL) and 62-116 (RPDL…KRKL). DNA-binding regions (H-T-H motif) lie at residues 37–61 (WRSLPRAAGLLRCGKSCRLRWINYL) and 89–112 (WSLIAARLPGRTDNEIKNYWNTHI).

In terms of assembly, interacts with SAD2. Expressed in anthers. Expressed in pollen grains and mature seeds. Expressed in roots and vasculature of leaves.

The protein resides in the nucleus. In terms of biological role, transcription factor involved in the negative regulation of flavonol biosynthesis. Represses the early phenylpropanoid genes, phenylalanine ammonia-lyase (PAL), cinnamate 4-hydroxylase (C4H) and 4-coumarate-CoA ligase (4CL), as well as the flavonoid-specific genes, flavonoid 3'-hydroxylase (F3'H) and dihydroflavonol 4-reductase (DFR). Plays a role in seed germination inhibition. Negatively regulates the expression of the abscisic acid (ABA) signaling transcription factor ABI5 in seeds. The protein is Transcription factor MYB7 of Arabidopsis thaliana (Mouse-ear cress).